A 331-amino-acid polypeptide reads, in one-letter code: Mitochondrial glycine transporter (331 aa).

3 Solcar repeats span residues 19–103 (SRTT…LRQG), 132–216 (LSNW…LKRR), and 234–318 (SSSS…LILR). The next 6 membrane-spanning stretches (helical) occupy residues 25 to 50 (FAAG…TRVQ), 78 to 104 (GTLP…RQGL), 138 to 163 (LATG…VRYE), 191 to 214 (GFGA…EQLK), 238 to 264 (INFV…KTRL), and 293 to 311 (GLGL…AWTV).

The protein belongs to the mitochondrial carrier (TC 2.A.29) family. SLC25A38 subfamily.

It is found in the mitochondrion inner membrane. The enzyme catalyses glycine(in) = glycine(out). In terms of biological role, mitochondrial glycine transporter that imports glycine into the mitochondrial matrix. Plays an important role in providing glycine for the first enzymatic step in heme biosynthesis, the condensation of glycine with succinyl-CoA to produce 5-aminolevulinate (ALA) in the mitochondrial matrix. The chain is Mitochondrial glycine transporter from Neosartorya fischeri (strain ATCC 1020 / DSM 3700 / CBS 544.65 / FGSC A1164 / JCM 1740 / NRRL 181 / WB 181) (Aspergillus fischerianus).